The sequence spans 174 residues: Mediator of RNA polymerase II transcription subunit 30 (174 aa).

A coiled-coil region spans residues valine 113–isoleucine 166.

Belongs to the Mediator complex subunit 30 family. In terms of assembly, component of the Mediator complex.

Its subcellular location is the nucleus. Functionally, component of the Mediator complex, a coactivator involved in the regulated transcription of nearly all RNA polymerase II-dependent genes. Mediator functions as a bridge to convey information from gene-specific regulatory proteins to the basal RNA polymerase II transcription machinery. Mediator is recruited to promoters by direct interactions with regulatory proteins and serves as a scaffold for the assembly of a functional preinitiation complex with RNA polymerase II and the general transcription factors. This is Mediator of RNA polymerase II transcription subunit 30 (med30) from Danio rerio (Zebrafish).